A 378-amino-acid polypeptide reads, in one-letter code: Succinyl-diaminopimelate desuccinylase (378 aa).

Histidine 68 is a Zn(2+) binding site. Aspartate 70 is a catalytic residue. Residue aspartate 101 coordinates Zn(2+). Glutamate 135 serves as the catalytic Proton acceptor. Positions 136, 164, and 350 each coordinate Zn(2+).

Belongs to the peptidase M20A family. DapE subfamily. As to quaternary structure, homodimer. Zn(2+) is required as a cofactor. It depends on Co(2+) as a cofactor.

The enzyme catalyses N-succinyl-(2S,6S)-2,6-diaminopimelate + H2O = (2S,6S)-2,6-diaminopimelate + succinate. Its pathway is amino-acid biosynthesis; L-lysine biosynthesis via DAP pathway; LL-2,6-diaminopimelate from (S)-tetrahydrodipicolinate (succinylase route): step 3/3. Its function is as follows. Catalyzes the hydrolysis of N-succinyl-L,L-diaminopimelic acid (SDAP), forming succinate and LL-2,6-diaminopimelate (DAP), an intermediate involved in the bacterial biosynthesis of lysine and meso-diaminopimelic acid, an essential component of bacterial cell walls. In Vibrio parahaemolyticus serotype O3:K6 (strain RIMD 2210633), this protein is Succinyl-diaminopimelate desuccinylase.